Here is a 341-residue protein sequence, read N- to C-terminus: MRLNGEISSGEEEEEEKQTGTTTFSSQKVVVGYALTSKKKKSFLQPSFTGLARNRGINFVAIDLNKPLPEQGPFDIILHKLSGEVWREIIEDYREKHPEVTVLDPPDAIQHLHNRQSMLQDVLDLNLSDCHGKVGVPRQLVITKEKDPSSIPYEVTKAGMKLPLVAKPLVVDGTAKSHELFLAYDEFSLSAVEPPLVLQEFVNHGGLLFKIYIVGETIKVVRRFSLPNISKRELSKVAGVFRFPRVSCAAASADDADLDPNIAEHPPRPLLERLARELRHRLGLHLFNIDMIREYGTKDVFYVIDINYFPGYGKMPGYEHVFTDFLLSLVESKCSNKKLAA.

Residues methionine 1–threonine 23 are disordered. Residues lysine 38 and lysine 80 each coordinate 1D-myo-inositol 6-phosphate. ATP contacts are provided by arginine 115 and lysine 167. Residues leucine 125–serine 335 enclose the ATP-grasp domain. 1D-myo-inositol 6-phosphate is bound by residues glycine 173 and histidine 178. Positions 178, 199, and 202 each coordinate ATP. Lysine 210 and tyrosine 212 together coordinate 1D-myo-inositol 6-phosphate. Serine 225 is a binding site for ATP. The catalytic specificity elements (CSE) stretch occupies residues glutamate 233–aspartate 259. Asparagine 288 lines the 1D-myo-inositol 6-phosphate pocket. A Mg(2+)-binding site is contributed by aspartate 290. Positions 304, 305, and 307 each coordinate ATP. The Mg(2+) site is built by aspartate 305 and asparagine 307. Residues asparagine 307, glycine 311, and lysine 314 each contribute to the 1D-myo-inositol 6-phosphate site.

It belongs to the ITPK1 family. In terms of assembly, monomer. Mg(2+) is required as a cofactor. Expressed in seeds.

It catalyses the reaction 1D-myo-inositol 1,3,4-trisphosphate + ATP = 1D-myo-inositol 1,3,4,5-tetrakisphosphate + ADP + H(+). The catalysed reaction is 1D-myo-inositol 1,3,4-trisphosphate + ATP = 1D-myo-inositol 1,3,4,6-tetrakisphosphate + ADP + H(+). The enzyme catalyses 1D-myo-inositol 3,4,5,6-tetrakisphosphate + ATP = 1D-myo-inositol 1,3,4,5,6-pentakisphosphate + ADP + H(+). It carries out the reaction 1D-myo-inositol 3,4,6-trisphosphate + ATP = 1D-myo-inositol 1,3,4,6-tetrakisphosphate + ADP + H(+). Its function is as follows. Kinase that can phosphorylate various inositol polyphosphate such as Ins(3,4,5,6)P4, Ins(3,4,6)P3 and Ins(1,3,4)P3. May participate in an inositol lipid-independent pathway of InsP6 synthesis. The chain is Inositol-tetrakisphosphate 1-kinase 4 from Glycine max (Soybean).